The chain runs to 260 residues: Proteasome subunit alpha type-1 (260 aa).

Positions 240–260 (PRTTGGAAAAAAPGGAEPMQM) are disordered. Positions 244–260 (GGAAAAAAPGGAEPMQM) are enriched in low complexity.

This sequence belongs to the peptidase T1A family. As to quaternary structure, the 26S proteasome consists of a 20S proteasome core and two 19S regulatory subunits. The 20S proteasome core is composed of 28 subunits that are arranged in four stacked rings, resulting in a barrel-shaped structure. The two end rings are each formed by seven alpha subunits, and the two central rings are each formed by seven beta subunits. The catalytic chamber with the active sites is on the inside of the barrel.

Its subcellular location is the cytoplasm. The protein resides in the nucleus. Its function is as follows. The proteasome is a multicatalytic proteinase complex which is characterized by its ability to cleave peptides with Arg, Phe, Tyr, Leu, and Glu adjacent to the leaving group at neutral or slightly basic pH. The proteasome has an ATP-dependent proteolytic activity. This is Proteasome subunit alpha type-1 (pas-6) from Caenorhabditis elegans.